Reading from the N-terminus, the 329-residue chain is 4-hydroxythreonine-4-phosphate dehydrogenase (329 aa).

Residues His136 and Thr137 each coordinate substrate. His166, His211, and His266 together coordinate a divalent metal cation. Residues Lys274, Asn283, and Arg292 each contribute to the substrate site.

This sequence belongs to the PdxA family. In terms of assembly, homodimer. Zn(2+) serves as cofactor. It depends on Mg(2+) as a cofactor. Co(2+) is required as a cofactor.

The protein resides in the cytoplasm. It carries out the reaction 4-(phosphooxy)-L-threonine + NAD(+) = 3-amino-2-oxopropyl phosphate + CO2 + NADH. Its pathway is cofactor biosynthesis; pyridoxine 5'-phosphate biosynthesis; pyridoxine 5'-phosphate from D-erythrose 4-phosphate: step 4/5. Its function is as follows. Catalyzes the NAD(P)-dependent oxidation of 4-(phosphooxy)-L-threonine (HTP) into 2-amino-3-oxo-4-(phosphooxy)butyric acid which spontaneously decarboxylates to form 3-amino-2-oxopropyl phosphate (AHAP). This chain is 4-hydroxythreonine-4-phosphate dehydrogenase, found in Shigella dysenteriae serotype 1 (strain Sd197).